Consider the following 451-residue polypeptide: Protease RseP (451 aa).

His22 contacts Zn(2+). Glu23 is a catalytic residue. His26 provides a ligand contact to Zn(2+). Residues 98-120 form a helical membrane-spanning segment; the sequence is AAIVSAGPIANFLFAIVAYWLVF. PDZ domains are found at residues 115–186 and 199–280; these read AYWL…APFG and QWQF…ERES. 2 consecutive transmembrane segments (helical) span residues 377–399 and 427–446; these read LVYY…LFPL and FSYR…ALFN.

Belongs to the peptidase M50B family. As to quaternary structure, interacts with RseA. Requires Zn(2+) as cofactor.

It localises to the cell inner membrane. Functionally, a site-2 regulated intramembrane protease (S2P) that cleaves the peptide bond between 'Ala-108' and 'Cys-109' in the transmembrane region of RseA. Part of a regulated intramembrane proteolysis (RIP) cascade. Acts on DegS-cleaved RseA to release the cytoplasmic domain of RseA. This provides the cell with sigma-E (RpoE) activity through the proteolysis of RseA. The sequence is that of Protease RseP (rseP) from Yersinia pestis.